The primary structure comprises 299 residues: rRNA methyltransferase (299 aa).

A disordered region spans residues 14 to 53 (AEKRSGRGRMAAARTTGAQSRKTAQRSGRSEADRRRRVHG). Positions 21–31 (GRMAAARTTGA) are enriched in low complexity. Positions 55, 57, 82, 103, 128, and 144 each coordinate S-adenosyl-L-methionine.

It belongs to the class I-like SAM-binding methyltransferase superfamily. rRNA adenine N(6)-methyltransferase family.

In terms of biological role, probable RNA methylase. Confers resistance to carbomycin and several other macrolides, lincomycin and vernamycin B, but not to all macrolide-lincosamide-streptogramin B antibiotics. This chain is rRNA methyltransferase (carB), found in Streptomyces thermotolerans.